The chain runs to 261 residues: U1 small nuclear ribonucleoprotein 70 kDa homolog (261 aa).

The region spanning lysine 100 to glycine 178 is the RRM domain. Residues glycine 192–asparagine 261 are disordered. Residues tyrosine 198–serine 215 show a composition bias toward basic and acidic residues. The segment covering glycine 216–phenylalanine 235 has biased composition (gly residues).

In terms of assembly, component of the spliceosome, where it is associated with snRNP U1. Associates with U1 snRNA.

The protein resides in the nucleus. Its function is as follows. Involved in nuclear mRNA splicing. Essential for growth. This chain is U1 small nuclear ribonucleoprotein 70 kDa homolog, found in Schizosaccharomyces pombe (strain 972 / ATCC 24843) (Fission yeast).